Here is a 1054-residue protein sequence, read N- to C-terminus: SMC5-SMC6 complex localization factor protein 1 (1054 aa).

BRCT domains follow at residues 2–80 and 121–199; these read EDSA…AKSG and PGAF…LLEK. Residues 283–303 are disordered; the sequence is RHGLENQKETKKKDKNIQRSY. A compositionally biased stretch (basic and acidic residues) spans 284–299; it reads HGLENQKETKKKDKNI. The NSE5-like domain; mediates interaction with SLF2 stretch occupies residues 407 to 1054; the sequence is PRGILNLIEN…MMCQSITELS (648 aa). ANK repeat units lie at residues 802–832, 836–865, and 870–900; these read KGETALHRVCIKNQVEKLIILLSLPGIDINV, AGWTPLHEACNYGNTECVQEILQRCPEVDL, and DGVTPLHDALSNGHVEIGKLLLQRGGPELLQ.

Interacts (via BRCT domains) with RAD18 (via C-terminus and phosphorylated form); this interaction is required for efficient repair of UV-induced DNA damage. Interacts (via N-terminus) with SLF2; this interaction links RAD18 to the SMC5-SMC6 complex. Interacts (via BRCT domains) with RAD18; this interaction occurs in a SLF2-independent manner. Interacts with SMC6. Widely expressed. Expressed in testis. Expressed in spermatocytes.

The protein resides in the nucleus. It is found in the cytoplasm. It localises to the cytoskeleton. The protein localises to the microtubule organizing center. Its subcellular location is the centrosome. Its function is as follows. Plays a role in the DNA damage response (DDR) pathway by regulating postreplication repair of UV-damaged DNA and genomic stability maintenance. The SLF1-SLF2 complex acts to link RAD18 with the SMC5-SMC6 complex at replication-coupled interstrand cross-links (ICL) and DNA double-strand breaks (DSBs) sites on chromatin during DNA repair in response to stalled replication forks. Promotes the recruitment of SLF2 and the SMC5-SMC6 complex to DNA lesions. This chain is SMC5-SMC6 complex localization factor protein 1, found in Mus musculus (Mouse).